The following is a 439-amino-acid chain: D-erythronate kinase (439 aa).

ATP-binding positions include S253, 366–369 (GGDV), and G412.

Belongs to the four-carbon acid sugar kinase family.

The enzyme catalyses D-erythronate + ATP = 4-phospho-D-erythronate + ADP + H(+). Functionally, catalyzes the ATP-dependent phosphorylation of D-erythronate to D-erythronate 4-phosphate. Can also phosphorylate D-threonate and 4-hydroxy-L-threonine, with lower efficiency. This Heliobacterium modesticaldum (strain ATCC 51547 / Ice1) protein is D-erythronate kinase.